The sequence spans 423 residues: GPI mannosyltransferase 2 (423 aa).

The next 9 membrane-spanning stretches (helical) occupy residues 7-27, 102-122, 128-148, 151-171, 191-211, 228-248, 298-318, 333-353, and 400-420; these read LTLIFIAACLSRILQLTILSG, VILGGTIVANVAFVAATLVLY, IFNPTFAFLTSLLYLLPPTAT, APYTEPIYSLLTFSGIYLLSI, TGIFNSITLMCFAVFGDAHIF, FLSAILVVAPFFMFQHYTETV, LAMPILFFSLAGVVKFFSHLV, PPPILFELYSVHVLTMALLLF, and YWIGWTVVWGAVAAVLWAGHY.

It belongs to the PIGV family.

It localises to the endoplasmic reticulum membrane. Its pathway is glycolipid biosynthesis; glycosylphosphatidylinositol-anchor biosynthesis. Mannosyltransferase involved in glycosylphosphatidylinositol-anchor biosynthesis. Transfers the second mannose to the glycosylphosphatidylinositol during GPI precursor assembly. This is GPI mannosyltransferase 2 (GPI18) from Cryptococcus neoformans var. neoformans serotype D (strain JEC21 / ATCC MYA-565) (Filobasidiella neoformans).